We begin with the raw amino-acid sequence, 317 residues long: GTP cyclohydrolase MptA (317 aa).

Belongs to the GTP cyclohydrolase IV family. In terms of assembly, homodimer. Fe(2+) is required as a cofactor.

The catalysed reaction is GTP + H2O = 7,8-dihydroneopterin 2',3'-cyclic phosphate + formate + diphosphate + H(+). Its pathway is cofactor biosynthesis; 5,6,7,8-tetrahydromethanopterin biosynthesis. Functionally, converts GTP to 7,8-dihydro-D-neopterin 2',3'-cyclic phosphate, the first intermediate in the biosynthesis of coenzyme methanopterin. This chain is GTP cyclohydrolase MptA, found in Methanococcoides burtonii (strain DSM 6242 / NBRC 107633 / OCM 468 / ACE-M).